The chain runs to 421 residues: 3-phosphoshikimate 1-carboxyvinyltransferase (421 aa).

Positions 19, 20, and 24 each coordinate 3-phosphoshikimate. Lys19 is a phosphoenolpyruvate binding site. 2 residues coordinate phosphoenolpyruvate: Gly88 and Arg116. 3-phosphoshikimate-binding residues include Ser160, Gln162, Asp307, and Lys334. Position 162 (Gln162) interacts with phosphoenolpyruvate. The Proton acceptor role is filled by Asp307. Phosphoenolpyruvate contacts are provided by Arg338 and Arg380.

The protein belongs to the EPSP synthase family. In terms of assembly, monomer.

The protein resides in the cytoplasm. It carries out the reaction 3-phosphoshikimate + phosphoenolpyruvate = 5-O-(1-carboxyvinyl)-3-phosphoshikimate + phosphate. It participates in metabolic intermediate biosynthesis; chorismate biosynthesis; chorismate from D-erythrose 4-phosphate and phosphoenolpyruvate: step 6/7. Its function is as follows. Catalyzes the transfer of the enolpyruvyl moiety of phosphoenolpyruvate (PEP) to the 5-hydroxyl of shikimate-3-phosphate (S3P) to produce enolpyruvyl shikimate-3-phosphate and inorganic phosphate. The sequence is that of 3-phosphoshikimate 1-carboxyvinyltransferase from Thermotoga sp. (strain RQ2).